Consider the following 363-residue polypeptide: Carbamoyl phosphate synthase small chain (363 aa).

Positions 1–172 (MTKRILMLED…AFASPGDGKR (172 aa)) are CPSase. Residues S46, G220, and G222 each contribute to the L-glutamine site. The Glutamine amidotransferase type-1 domain maps to 172–359 (RVVLVDYGVK…MEMMNGKEEG (188 aa)). C247 (nucleophile) is an active-site residue. Residues L248, Q251, N289, G291, and Y292 each coordinate L-glutamine. Catalysis depends on residues H332 and E334.

Belongs to the CarA family. In terms of assembly, composed of two chains; the small (or glutamine) chain promotes the hydrolysis of glutamine to ammonia, which is used by the large (or ammonia) chain to synthesize carbamoyl phosphate. Tetramer of heterodimers (alpha,beta)4.

It catalyses the reaction hydrogencarbonate + L-glutamine + 2 ATP + H2O = carbamoyl phosphate + L-glutamate + 2 ADP + phosphate + 2 H(+). It carries out the reaction L-glutamine + H2O = L-glutamate + NH4(+). It functions in the pathway amino-acid biosynthesis; L-arginine biosynthesis; carbamoyl phosphate from bicarbonate: step 1/1. The protein operates within pyrimidine metabolism; UMP biosynthesis via de novo pathway; (S)-dihydroorotate from bicarbonate: step 1/3. Small subunit of the glutamine-dependent carbamoyl phosphate synthetase (CPSase). CPSase catalyzes the formation of carbamoyl phosphate from the ammonia moiety of glutamine, carbonate, and phosphate donated by ATP, constituting the first step of 2 biosynthetic pathways, one leading to arginine and/or urea and the other to pyrimidine nucleotides. The small subunit (glutamine amidotransferase) binds and cleaves glutamine to supply the large subunit with the substrate ammonia. The protein is Carbamoyl phosphate synthase small chain of Listeria monocytogenes serotype 4b (strain F2365).